We begin with the raw amino-acid sequence, 896 residues long: Isoleucine--tRNA ligase (896 aa).

The short motif at 57 to 67 (PYANNNIHIGH) is the 'HIGH' region element. An L-isoleucyl-5'-AMP-binding site is contributed by Glu543. Residues 584-588 (KMSKS) carry the 'KMSKS' region motif. ATP is bound at residue Lys587. Cys869, Cys872, Cys885, and Cys888 together coordinate Zn(2+).

The protein belongs to the class-I aminoacyl-tRNA synthetase family. IleS type 1 subfamily. As to quaternary structure, monomer. Requires Zn(2+) as cofactor.

Its subcellular location is the cytoplasm. The enzyme catalyses tRNA(Ile) + L-isoleucine + ATP = L-isoleucyl-tRNA(Ile) + AMP + diphosphate. In terms of biological role, catalyzes the attachment of isoleucine to tRNA(Ile). As IleRS can inadvertently accommodate and process structurally similar amino acids such as valine, to avoid such errors it has two additional distinct tRNA(Ile)-dependent editing activities. One activity is designated as 'pretransfer' editing and involves the hydrolysis of activated Val-AMP. The other activity is designated 'posttransfer' editing and involves deacylation of mischarged Val-tRNA(Ile). The sequence is that of Isoleucine--tRNA ligase from Acholeplasma laidlawii (strain PG-8A).